Consider the following 467-residue polypeptide: tRNA-2-methylthio-N(6)-dimethylallyladenosine synthase (467 aa).

A disordered region spans residues 1 to 20; the sequence is MSDDTTQIEPAMAQETSPRA. Positions 23-143 constitute an MTTase N-terminal domain; it reads RKVFVKTYGC…LPNALARVRG (121 aa). [4Fe-4S] cluster is bound by residues Cys32, Cys68, Cys106, Cys184, Cys188, and Cys191. In terms of domain architecture, Radical SAM core spans 170–402; the sequence is RKRGVSAFLT…QALLSAQQYA (233 aa). One can recognise a TRAM domain in the interval 405-467; it reads DSMIGRKMDV…TNSLIAQKLA (63 aa).

It belongs to the methylthiotransferase family. MiaB subfamily. Monomer. [4Fe-4S] cluster serves as cofactor.

The protein localises to the cytoplasm. The enzyme catalyses N(6)-dimethylallyladenosine(37) in tRNA + (sulfur carrier)-SH + AH2 + 2 S-adenosyl-L-methionine = 2-methylsulfanyl-N(6)-dimethylallyladenosine(37) in tRNA + (sulfur carrier)-H + 5'-deoxyadenosine + L-methionine + A + S-adenosyl-L-homocysteine + 2 H(+). Functionally, catalyzes the methylthiolation of N6-(dimethylallyl)adenosine (i(6)A), leading to the formation of 2-methylthio-N6-(dimethylallyl)adenosine (ms(2)i(6)A) at position 37 in tRNAs that read codons beginning with uridine. In Brucella melitensis biotype 1 (strain ATCC 23456 / CCUG 17765 / NCTC 10094 / 16M), this protein is tRNA-2-methylthio-N(6)-dimethylallyladenosine synthase.